A 292-amino-acid polypeptide reads, in one-letter code: Putative gonadotropin-releasing hormone II receptor (292 aa).

Topologically, residues 1–28 are extracellular; it reads MSAGNGTPWDATWNITVQWLAVDIACRT. An intrachain disulfide couples Cys26 to Cys101. The chain crosses the membrane as a helical span at residues 29–49; it reads LMFLKLMATYSAAFLPVVIGL. Over 50–67 the chain is Cytoplasmic; that stretch reads DRQAAVLNPLGSRSGVRK. Residues 68-88 form a helical membrane-spanning segment; sequence LLGAAWGLSFLLAFPQLFLFH. Topologically, residues 89-115 are extracellular; that stretch reads TVHCAGPVPFTQCVTKGSFKAQWQETT. The chain crosses the membrane as a helical span at residues 116 to 136; it reads YNLFTFCCLFLLPLTAMAICY. The Cytoplasmic portion of the chain corresponds to 137–177; that stretch reads SRIVLSVSRPQTRKGSHAPAGEFALPRSFDNCPRVRLRALR. A helical membrane pass occupies residues 178 to 198; the sequence is LALLILLTFILCWTPYYLLGM. Over 199 to 216 the chain is Extracellular; that stretch reads WYWFSPTMLTEVPPSLSH. A helical membrane pass occupies residues 217–237; that stretch reads ILFLLGLLNAPLDPLLYGAFT. Over 238-292 the chain is Cytoplasmic; it reads LGCRRGHQELSIDSSKEGSGRMLQEEIHAFRQLEVQKTVTSRRAGETKGISITSI.

This sequence belongs to the G-protein coupled receptor 1 family. Phosphorylated on the C-terminal cytoplasmic tail. As to expression, expressed in many tissues.

It localises to the cell membrane. Its function is as follows. Putative receptor for gonadotropin releasing hormone II (GnRH II) which is most probably non-functional. This chain is Putative gonadotropin-releasing hormone II receptor (GNRHR2), found in Homo sapiens (Human).